The following is a 1527-amino-acid chain: ATP-binding cassette sub-family C member 3 (1527 aa).

The Extracellular segment spans residues 1–32; that stretch reads MDALCGSGELGSKFWDSNLSVHTENPDLTPCF. An N-linked (GlcNAc...) asparagine glycan is attached at Asn-18. A helical membrane pass occupies residues 33–53; it reads QNSLLAWVPCIYLWVALPCYL. Residues 54–73 lie on the Cytoplasmic side of the membrane; it reads LYLRHHCRGYIILSHLSKLK. The chain crosses the membrane as a helical span at residues 74-94; that stretch reads MVLGVLLWCVSWADLFYSFHG. The Extracellular portion of the chain corresponds to 95–99; sequence LVHGR. The helical transmembrane segment at 100–120 threads the bilayer; it reads APAPVFFVTPLVVGVTMLLAT. Residues 121–132 are Cytoplasmic-facing; it reads LLIQYERLQGVQ. The helical transmembrane segment at 133-153 threads the bilayer; the sequence is SSGVLIIFWFLCVVCAIVPFR. Residues 154 to 171 lie on the Extracellular side of the membrane; sequence SKILLAKAEGEISDPFRF. The helical transmembrane segment at 172 to 192 threads the bilayer; sequence TTFYIHFALVLSALILACFRE. Topologically, residues 193–302 are cytoplasmic; sequence KPPFFSAKNV…RPRKPSFLKA (110 aa). A helical membrane pass occupies residues 303 to 323; it reads LLATFGSSFLISACFKLIQDL. Residues 311–594 form the ABC transmembrane type-1 1 domain; that stretch reads FLISACFKLI…LPQLISNLTQ (284 aa). Topologically, residues 324 to 349 are extracellular; it reads LSFINPQLLSILIRFISNPMAPSWWG. A helical membrane pass occupies residues 350–370; it reads FLVAGLMFLCSMMQSLILQHY. Topologically, residues 371–426 are cytoplasmic; that stretch reads YHYIFVTGVKFRTGIMGVIYRKALVITNSVKRASTVGEIVNLMSVDAQRFMDLAPF. The helical transmembrane segment at 427–447 threads the bilayer; that stretch reads LNLLWSAPLQIILAIYFLWQN. Topologically, residues 448 to 450 are extracellular; that stretch reads LGP. Residues 451–471 form a helical membrane-spanning segment; sequence SVLAGVAFMVLLIPLNGAVAV. Topologically, residues 472 to 533 are cytoplasmic; it reads KMRAFQVKQM…LLRTAAYLHT (62 aa). Residues 534–554 form a helical membrane-spanning segment; the sequence is TTTFTWMCSPFLVTLITLWVY. The Extracellular segment spans residues 555–576; sequence VYVDPNNVLDAEKAFVSVSLFN. A helical transmembrane segment spans residues 577-597; that stretch reads ILRLPLNMLPQLISNLTQASV. Topologically, residues 598–963 are cytoplasmic; that stretch reads SLKRIQQFLS…VELSVFWDYA (366 aa). In terms of domain architecture, ABC transporter 1 spans 629–851; it reads IHSGTFTWAQ…NGSFANFLCN (223 aa). Residue 661–668 participates in ATP binding; the sequence is GPVGCGKS. Ser-908 and Ser-911 each carry phosphoserine. The tract at residues 910 to 932 is disordered; it reads LSSDGEGQGRPVPRRHLGPSEKV. The chain crosses the membrane as a helical span at residues 964–984; the sequence is KAVGLCTTLAICLLYVGQSAA. Residues 971–1252 form the ABC transmembrane type-1 2 domain; it reads TLAICLLYVG…MIRMMSDLES (282 aa). The Extracellular portion of the chain corresponds to 985–1021; sequence AIGANVWLSAWTNDAMADSRQNNTSLRLGVYAALGIL. N-linked (GlcNAc...) asparagine glycans are attached at residues Asn-1006 and Asn-1007. The helical transmembrane segment at 1022 to 1042 threads the bilayer; sequence QGFLVMLAAMAMAAGGIQAAR. Over 1043–1085 the chain is Cytoplasmic; the sequence is VLHQALLHNKIRSPQSFFDTTPSGRILNCFSKDIYVVDEVLAP. The chain crosses the membrane as a helical span at residues 1086–1106; sequence VILMLLNSFFNAISTLVVIMA. Ser-1107 is a topological domain (extracellular). A helical transmembrane segment spans residues 1108–1128; the sequence is TPLFTVVILPLAVLYTLVQRF. Topologically, residues 1129–1199 are cytoplasmic; that stretch reads YAATSRQLKR…ISNRWLSIGV (71 aa). Residues 1200 to 1220 traverse the membrane as a helical segment; the sequence is EFVGNCVVLFAALFAVIGRSS. The Extracellular portion of the chain corresponds to 1221–1222; that stretch reads LN. The helical transmembrane segment at 1223–1243 threads the bilayer; that stretch reads PGLVGLSVSYSLQVTFALNWM. Residues 1244–1527 are Cytoplasmic-facing; the sequence is IRMMSDLESN…YGMARDAGLA (284 aa). The region spanning 1291 to 1523 is the ABC transporter 2 domain; it reads FRNYSVRYRP…RGIFYGMARD (233 aa). 1323-1330 contributes to the ATP binding site; that stretch reads GRTGAGKS.

This sequence belongs to the ABC transporter superfamily. ABCC family. Conjugate transporter (TC 3.A.1.208) subfamily. As to expression, mainly expressed in the liver. Also expressed in small intestine, colon, prostate, testis, brain and at a lower level in the kidney. In testis, localized to peritubular myoid cells, Leydig cells, along the basal membrane of Sertoli cells and moderately in the adluminal compartment of the seminiferous tubules.

It is found in the basolateral cell membrane. It localises to the basal cell membrane. The enzyme catalyses taurocholate(in) + ATP + H2O = taurocholate(out) + ADP + phosphate + H(+). The catalysed reaction is glycocholate(in) + ATP + H2O = glycocholate(out) + ADP + phosphate + H(+). It catalyses the reaction taurolithocholate 3-sulfate(in) + ATP + H2O = taurolithocholate 3-sulfate(out) + ADP + phosphate + H(+). It carries out the reaction taurochenodeoxycholate 3-sulfate(in) + ATP + H2O = taurochenodeoxycholate 3-sulfate(out) + ADP + phosphate + H(+). The enzyme catalyses an S-substituted glutathione(in) + ATP + H2O = an S-substituted glutathione(out) + ADP + phosphate + H(+). The catalysed reaction is ATP + H2O + xenobioticSide 1 = ADP + phosphate + xenobioticSide 2.. It catalyses the reaction 17beta-estradiol 17-O-(beta-D-glucuronate)(in) + ATP + H2O = 17beta-estradiol 17-O-(beta-D-glucuronate)(out) + ADP + phosphate + H(+). It carries out the reaction dehydroepiandrosterone 3-sulfate(in) + ATP + H2O = dehydroepiandrosterone 3-sulfate(out) + ADP + phosphate + H(+). The enzyme catalyses leukotriene C4(in) + ATP + H2O = leukotriene C4(out) + ADP + phosphate + H(+). The catalysed reaction is (4Z,15Z)-bilirubin IXalpha C8-beta-D-glucuronoside(in) + ATP + H2O = (4Z,15Z)-bilirubin IXalpha C8-beta-D-glucuronoside(out) + ADP + phosphate + H(+). It catalyses the reaction (4Z,15Z)-bilirubin IXalpha C8,C12-beta-D-bisglucuronoside(in) + ATP + H2O = (4Z,15Z)-bilirubin IXalpha C8,C12-beta-D-bisglucuronoside(out) + ADP + phosphate + H(+). ATP-dependent transporter of the ATP-binding cassette (ABC) family that binds and hydrolyzes ATP to enable active transport of various substrates including many drugs, toxicants and endogenous compound across cell membranes. Transports glucuronide conjugates such as bilirubin diglucuronide, estradiol-17-beta-o-glucuronide and GSH conjugates such as leukotriene C4 (LTC4). Transports also various bile salts (taurocholate, glycocholate, taurochenodeoxycholate-3-sulfate, taurolithocholate- 3-sulfate). Does not contribute substantially to bile salt physiology but provides an alternative route for the export of bile acids and glucuronides from cholestatic hepatocytes. May contribute to regulate the transport of organic compounds in testes across the blood-testis-barrier. Can confer resistance to various anticancer drugs, methotrexate, tenoposide and etoposide, by decreasing accumulation of these drugs in cells. The sequence is that of ATP-binding cassette sub-family C member 3 from Homo sapiens (Human).